We begin with the raw amino-acid sequence, 30 residues long: Cysteine-rich venom protein okinavin (30 aa).

Residues 1–30 (SVDFDSESPRKPXIQNEIVDLHNPLRRXVN) form a disordered region.

Belongs to the CRISP family. Post-translationally, contains 8 disulfide bonds. Expressed by the venom gland.

It localises to the secreted. Its function is as follows. Inhibits calcium-activated potassium channels (KCa), voltage-gated potassium channel (Kv), and the calcium release channel/ryanodine receptor (RyR). The sequence is that of Cysteine-rich venom protein okinavin from Ovophis okinavensis (Ryukyu Island pit viper).